We begin with the raw amino-acid sequence, 159 residues long: Phosphopantetheine adenylyltransferase (159 aa).

His-16 serves as a coordination point for ATP. The substrate site is built by Lys-40, Met-72, and Arg-86. ATP-binding positions include 87-89 (GLR), Glu-97, and 122-128 (YQYLSAS).

This sequence belongs to the bacterial CoaD family. In terms of assembly, homohexamer. Requires Mg(2+) as cofactor.

It localises to the cytoplasm. It carries out the reaction (R)-4'-phosphopantetheine + ATP + H(+) = 3'-dephospho-CoA + diphosphate. It functions in the pathway cofactor biosynthesis; coenzyme A biosynthesis; CoA from (R)-pantothenate: step 4/5. Its function is as follows. Reversibly transfers an adenylyl group from ATP to 4'-phosphopantetheine, yielding dephospho-CoA (dPCoA) and pyrophosphate. The protein is Phosphopantetheine adenylyltransferase of Dehalococcoides mccartyi (strain ATCC BAA-2100 / JCM 16839 / KCTC 5957 / BAV1).